A 295-amino-acid polypeptide reads, in one-letter code: Small ribosomal subunit protein uS2 (295 aa).

A disordered region spans residues 273–295 (WAASSAPAAETLADPAADPSVKW). Over residues 274–295 (AASSAPAAETLADPAADPSVKW) the composition is skewed to low complexity.

This sequence belongs to the universal ribosomal protein uS2 family. In terms of assembly, component of the small ribosomal subunit. Mature ribosomes consist of a small (40S) and a large (60S) subunit. The 40S subunit contains about 33 different proteins and 1 molecule of RNA (18S). The 60S subunit contains about 49 different proteins and 3 molecules of RNA (25S, 5.8S and 5S). Interacts with RPS21.

It localises to the cytoplasm. Its function is as follows. Required for the assembly and/or stability of the 40S ribosomal subunit. Required for the processing of the 20S rRNA-precursor to mature 18S rRNA in a late step of the maturation of 40S ribosomal subunits. In Paracoccidioides lutzii (strain ATCC MYA-826 / Pb01) (Paracoccidioides brasiliensis), this protein is Small ribosomal subunit protein uS2.